A 216-amino-acid polypeptide reads, in one-letter code: Pyrophosphatase PpaX (216 aa).

Asp9 functions as the Nucleophile in the catalytic mechanism.

The protein belongs to the HAD-like hydrolase superfamily. PpaX family. The cofactor is Mg(2+).

It catalyses the reaction diphosphate + H2O = 2 phosphate + H(+). Its function is as follows. Hydrolyzes pyrophosphate formed during P-Ser-HPr dephosphorylation by HPrK/P. Might play a role in controlling the intracellular pyrophosphate pool. This is Pyrophosphatase PpaX from Bacillus anthracis (strain CDC 684 / NRRL 3495).